Here is a 173-residue protein sequence, read N- to C-terminus: Galactose-6-phosphate isomerase subunit LacB (173 aa).

It belongs to the LacAB/RpiB family. As to quaternary structure, heteromultimeric protein consisting of LacA and LacB.

The catalysed reaction is aldehydo-D-galactose 6-phosphate = keto-D-tagatose 6-phosphate. It functions in the pathway carbohydrate metabolism; D-galactose 6-phosphate degradation; D-tagatose 6-phosphate from D-galactose 6-phosphate: step 1/1. This chain is Galactose-6-phosphate isomerase subunit LacB, found in Clostridium acetobutylicum (strain ATCC 824 / DSM 792 / JCM 1419 / IAM 19013 / LMG 5710 / NBRC 13948 / NRRL B-527 / VKM B-1787 / 2291 / W).